The chain runs to 806 residues: WEB family protein At3g02930, chloroplastic (806 aa).

The N-terminal 78 residues, 1–78, are a transit peptide targeting the chloroplast; the sequence is MASKIKNGLS…PTPPEKTQIR (78 aa). 2 disordered regions span residues 1–94 and 380–403; these read MASK…QIKE and KSEQ…EKLK. A compositionally biased stretch (low complexity) spans 9–22; sequence LSDTTLRKSSSTSL. The segment covering 34 to 59 has biased composition (polar residues); that stretch reads PDSNSPSPTQQQSRLSFERPSSNSKP. Coiled coils occupy residues 88–530, 585–662, and 698–757; these read QSVQ…FESA, DCLK…IEEN, and ETLD…EDLN. The segment covering 391-403 has biased composition (basic and acidic residues); the sequence is ESSKSEKEAEKLK. Disordered stretches follow at residues 684 to 725 and 746 to 777; these read ENGY…EDET and KESA…EDEL. Basic and acidic residues-rich tracts occupy residues 685-699 and 706-725; these read NGYR…KVET and KLEE…EDET. Over residues 759 to 769 the composition is skewed to polar residues; it reads VDQSQKTSPVN.

It belongs to the WEB family.

The protein resides in the plastid. The protein localises to the chloroplast. The polypeptide is WEB family protein At3g02930, chloroplastic (Arabidopsis thaliana (Mouse-ear cress)).